The chain runs to 142 residues: Nucleoside diphosphate kinase (142 aa).

ATP is bound by residues K11, F59, R87, T93, R104, and N114. H117 serves as the catalytic Pros-phosphohistidine intermediate.

The protein belongs to the NDK family. As to quaternary structure, homotetramer. Mg(2+) is required as a cofactor.

The protein localises to the cytoplasm. The catalysed reaction is dZDP + ATP = dZTP + ADP. It catalyses the reaction a 2'-deoxyribonucleoside 5'-diphosphate + ATP = a 2'-deoxyribonucleoside 5'-triphosphate + ADP. It carries out the reaction a ribonucleoside 5'-diphosphate + ATP = a ribonucleoside 5'-triphosphate + ADP. The protein operates within purine metabolism. Major role in the synthesis of nucleoside triphosphates other than ATP. The ATP gamma phosphate is transferred to the NDP beta phosphate via a ping-pong mechanism, using a phosphorylated active-site intermediate. Functionally, (Microbial infection) Catalyzes the phosphorylation of dZDP to dZTP, when the bacterium is infected by a phage that produces the substrate for the synthesis of dZTP (2- amino-2'-deoxyadenosine 5'-triphosphate), which is then used by the phage as a DNA polymerase substrate. The sequence is that of Nucleoside diphosphate kinase from Vibrio cholerae serotype O1 (strain ATCC 39315 / El Tor Inaba N16961).